The sequence spans 106 residues: MSAQQDNQMQGVQDPAAEGKGKGKAPEDNTVEESMDDDSSDESGAEEQVLEEPDEDNMEEIDTANVIGSRTRGKNIDFAKANQELGDDDEEDDDEDFVDPDDEMKD.

The span at 1-11 shows a compositional bias: polar residues; the sequence is MSAQQDNQMQG. Positions 1–106 are disordered; it reads MSAQQDNQMQ…FVDPDDEMKD (106 aa). Basic and acidic residues predominate over residues 17-27; it reads AEGKGKGKAPE. 2 stretches are compositionally biased toward acidic residues: residues 29–62 and 85–106; these read NTVE…EEID and LGDD…EMKD.

This sequence belongs to the CHZ1 family. As to quaternary structure, forms a heterotrimer with H2A.Z-H2B, stabilizing the association of the histone dimer. Also, with a lower affinity, forms a heterotrimer with H2A-H2B.

The protein resides in the nucleus. Forms a chaperone-bound H2A.Z-H2B complex that acts as a source for SWR1 complex-dependent H2A to H2A.Z histone replacement in chromatin. The chain is Histone H2A.Z-specific chaperone CHZ1 (CHZ1) from Phaeosphaeria nodorum (strain SN15 / ATCC MYA-4574 / FGSC 10173) (Glume blotch fungus).